Here is a 350-residue protein sequence, read N- to C-terminus: 26S proteasome non-ATPase regulatory subunit 8 (350 aa).

The interval 1 to 24 (MFIKGRAPRAPPRERRRATRGGLR) is disordered. Ser106 is modified (phosphoserine). The 170-residue stretch at 162–331 (PSFERYMAQL…QQKPEDTTIP (170 aa)) folds into the PCI domain. A Glycyl lysine isopeptide (Lys-Gly) (interchain with G-Cter in SUMO2) cross-link involves residue Lys297.

Belongs to the proteasome subunit S14 family. Component of the 19S proteasome regulatory particle complex. The 26S proteasome consists of a 20S core particle (CP) and two 19S regulatory subunits (RP). The regulatory particle is made of a lid composed of 9 subunits including PSMD8, a base containing 6 ATPases and few additional components. Interacts with DDI2. Interacts with TASOR.

Functionally, component of the 26S proteasome, a multiprotein complex involved in the ATP-dependent degradation of ubiquitinated proteins. This complex plays a key role in the maintenance of protein homeostasis by removing misfolded or damaged proteins, which could impair cellular functions, and by removing proteins whose functions are no longer required. Therefore, the proteasome participates in numerous cellular processes, including cell cycle progression, apoptosis, or DNA damage repair. In Homo sapiens (Human), this protein is 26S proteasome non-ATPase regulatory subunit 8 (PSMD8).